We begin with the raw amino-acid sequence, 41 residues long: Large ribosomal subunit protein bL36 (41 aa).

This sequence belongs to the bacterial ribosomal protein bL36 family.

The protein is Large ribosomal subunit protein bL36 of Novosphingobium aromaticivorans (strain ATCC 700278 / DSM 12444 / CCUG 56034 / CIP 105152 / NBRC 16084 / F199).